We begin with the raw amino-acid sequence, 405 residues long: Phosphopentomutase (405 aa).

D10, D303, H308, D344, H345, and H356 together coordinate Mn(2+).

This sequence belongs to the phosphopentomutase family. Mn(2+) serves as cofactor.

It is found in the cytoplasm. The enzyme catalyses 2-deoxy-alpha-D-ribose 1-phosphate = 2-deoxy-D-ribose 5-phosphate. The catalysed reaction is alpha-D-ribose 1-phosphate = D-ribose 5-phosphate. Its pathway is carbohydrate degradation; 2-deoxy-D-ribose 1-phosphate degradation; D-glyceraldehyde 3-phosphate and acetaldehyde from 2-deoxy-alpha-D-ribose 1-phosphate: step 1/2. Isomerase that catalyzes the conversion of deoxy-ribose 1-phosphate (dRib-1-P) and ribose 1-phosphate (Rib-1-P) to deoxy-ribose 5-phosphate (dRib-5-P) and ribose 5-phosphate (Rib-5-P), respectively. The protein is Phosphopentomutase of Shewanella pealeana (strain ATCC 700345 / ANG-SQ1).